The chain runs to 953 residues: Valine--tRNA ligase (953 aa).

The 'HIGH' region signature appears at 42–52 (PNVTGSLHMGH). The short motif at 554–558 (KMSKS) is the 'KMSKS' region element. Lysine 557 is an ATP binding site. The stretch at 884–952 (LIDKDAELDR…LEQQKATIAA (69 aa)) forms a coiled coil.

This sequence belongs to the class-I aminoacyl-tRNA synthetase family. ValS type 1 subfamily. As to quaternary structure, monomer.

Its subcellular location is the cytoplasm. The catalysed reaction is tRNA(Val) + L-valine + ATP = L-valyl-tRNA(Val) + AMP + diphosphate. Catalyzes the attachment of valine to tRNA(Val). As ValRS can inadvertently accommodate and process structurally similar amino acids such as threonine, to avoid such errors, it has a 'posttransfer' editing activity that hydrolyzes mischarged Thr-tRNA(Val) in a tRNA-dependent manner. The protein is Valine--tRNA ligase of Vibrio cholerae serotype O1 (strain ATCC 39315 / El Tor Inaba N16961).